A 350-amino-acid chain; its full sequence is GDSL esterase/lipase At2g04570 (350 aa).

The first 23 residues, 1 to 23 (MGHLKSLFTILFLIAMSSTVTFA), serve as a signal peptide directing secretion. The active-site Nucleophile is Ser35. N-linked (GlcNAc...) asparagine glycans are attached at residues Asn98 and Asn117. Residues Asp325 and His328 contribute to the active site. Residue Asn343 is glycosylated (N-linked (GlcNAc...) asparagine).

Belongs to the 'GDSL' lipolytic enzyme family.

The protein resides in the secreted. This Arabidopsis thaliana (Mouse-ear cress) protein is GDSL esterase/lipase At2g04570.